Consider the following 323-residue polypeptide: Protein translocase subunit SecF (323 aa).

Over M1–W22 the chain is Cytoplasmic. The chain crosses the membrane as a helical span at residues D23 to V43. Over R44–L142 the chain is Periplasmic. Residues A143–F163 traverse the membrane as a helical segment. Topologically, residues R164 to A170 are cytoplasmic. Residues A171–F191 traverse the membrane as a helical segment. Topologically, residues H192 to D196 are periplasmic. A helical membrane pass occupies residues L197–V217. Residues S218 to R247 lie on the Cytoplasmic side of the membrane. A helical membrane pass occupies residues T248 to L270. Residues E271 to G280 are Periplasmic-facing. The chain crosses the membrane as a helical span at residues V281–M301. Over K302–P323 the chain is Cytoplasmic.

Belongs to the SecD/SecF family. SecF subfamily. As to quaternary structure, forms a complex with SecD. Part of the essential Sec protein translocation apparatus which comprises SecA, SecYEG and auxiliary proteins SecDF-YajC and YidC.

The protein localises to the cell inner membrane. Part of the Sec protein translocase complex. Interacts with the SecYEG preprotein conducting channel. SecDF uses the proton motive force (PMF) to complete protein translocation after the ATP-dependent function of SecA. The sequence is that of Protein translocase subunit SecF from Escherichia coli O157:H7.